The sequence spans 317 residues: Putrescine transport system permease protein PotH (317 aa).

Residues 1–31 (MSTLEPAAQSKPPGGFKLWLSQLQMKHGRKL) are Cytoplasmic-facing. The chain crosses the membrane as a helical span at residues 32–51 (VIALPYIWLILLFLLPFLIV). Over 52–104 (FKISLAEMARAIPPYTELMEWADGQLSITLNLGNFLQLTDDPLYFDAYLQSLQ) the chain is Periplasmic. In terms of domain architecture, ABC transmembrane type-1 spans 99 to 305 (YLQSLQVAAI…LLLIVPIMWF (207 aa)). Residues 105 to 124 (VAAISTFCCLLIGYPLAWAV) form a helical membrane-spanning segment. Over 125–133 (AHSKPSTRN) the chain is Cytoplasmic. A helical transmembrane segment spans residues 134–153 (ILLLLVILPSWTSFLIRVYA). Residues 154-184 (WMGILKNNGVLNNFLLWLGVIDQPLTILHTN) lie on the Periplasmic side of the membrane. Residues 185–204 (LAVYIGIVYAYVPFMVLPIY) form a helical membrane-spanning segment. Residues 205–239 (TALIRIDYSLVEAALDLGARPLKTFFTVIVPLTKG) are Cytoplasmic-facing. A helical transmembrane segment spans residues 240-259 (GIIAGSMLVFIPAVGEFVIP). Over 260–284 (ELLGGPDSIMIGRVLWQEFFNNRDW) the chain is Periplasmic. A helical membrane pass occupies residues 285–304 (PVASAVAIIMLLLLIVPIMW). Topologically, residues 305-317 (FHKHQQKSVGEHG) are cytoplasmic.

The protein belongs to the binding-protein-dependent transport system permease family. CysTW subfamily. In terms of assembly, the complex is composed of two ATP-binding proteins (PotG), two transmembrane proteins (PotH and PotI) and a solute-binding protein (PotF).

It localises to the cell inner membrane. With respect to regulation, transport is feedback inhibited by intracellular polyamines. Its function is as follows. Part of the ABC transporter complex PotFGHI involved in putrescine uptake. Responsible for the translocation of the substrate across the membrane. Imports putrescine for maintenance of the optimal concentration of polyamines necessary for cell growth in the presence of glucose. This Escherichia coli (strain K12) protein is Putrescine transport system permease protein PotH.